We begin with the raw amino-acid sequence, 250 residues long: Manganese transport system ATP-binding protein MntB (250 aa).

In terms of domain architecture, ABC transporter spans 4–236 (VELDNVTVAY…NLQKTYGGRL (233 aa)). Residue 36–43 (GPNGAGKS) participates in ATP binding.

It belongs to the ABC transporter superfamily. In terms of assembly, the complex is probably composed of two ATP-binding proteins (MntB), two transmembrane proteins (MntC and MntD) and a solute-binding protein (MntA).

It is found in the cell membrane. In terms of biological role, probably part of the ABC transporter complex MntABCD involved in manganese import. Probably responsible for energy coupling to the transport system. This is Manganese transport system ATP-binding protein MntB from Bacillus subtilis (strain 168).